The chain runs to 368 residues: Protein L-Myc (368 aa).

Disordered regions lie at residues proline 39 to serine 79, arginine 112 to arginine 179, and phenylalanine 218 to arginine 295. Positions leucine 135–glutamine 147 are enriched in polar residues. Residues glutamate 247–isoleucine 258 are compositionally biased toward acidic residues. The span at aspartate 283–glutamate 294 shows a compositional bias: basic and acidic residues. The region spanning threonine 285–leucine 337 is the bHLH domain. Residues leucine 337–leucine 365 form a leucine-zipper region.

As to quaternary structure, efficient DNA binding requires dimerization with another bHLH protein. Binds DNA as a heterodimer with MAX.

The protein resides in the nucleus. In Mus musculus (Mouse), this protein is Protein L-Myc (Mycl).